A 460-amino-acid chain; its full sequence is Probable serine/threonine-protein kinase kinase DDB_G0280557 (460 aa).

A Protein kinase domain is found at Ile102–Phe416. Residues Lys131 and Gln154–Leu162 each bind ATP. Asp250 functions as the Proton acceptor in the catalytic mechanism.

Belongs to the protein kinase superfamily. CMGC Ser/Thr protein kinase family. MAP kinase subfamily.

The catalysed reaction is L-seryl-[protein] + ATP = O-phospho-L-seryl-[protein] + ADP + H(+). The enzyme catalyses L-threonyl-[protein] + ATP = O-phospho-L-threonyl-[protein] + ADP + H(+). The chain is Probable serine/threonine-protein kinase kinase DDB_G0280557 from Dictyostelium discoideum (Social amoeba).